A 69-amino-acid polypeptide reads, in one-letter code: Pancreatic secretory trypsin inhibitor (69 aa).

The Kazal-like domain maps to 8 to 65 (TGTEAACSNYDLKKGCAKIFDPVCGTDNILYSNECLLCFQNLQRKTNVRIKRRGTCQE). 3 disulfides stabilise this stretch: C14/C45, C23/C42, and C31/C63.

It is found in the secreted. Functionally, this is a trypsin inhibitor, its physiological function is to prevent the trypsin-catalyzed premature activation of zymogens within the pancreas. The chain is Pancreatic secretory trypsin inhibitor (SPINK1) from Struthio camelus (Common ostrich).